Reading from the N-terminus, the 528-residue chain is Pentatricopeptide repeat-containing protein At1g62914, mitochondrial (528 aa).

A mitochondrion-targeting transit peptide spans methionine 1 to arginine 20. 13 PPR repeats span residues serine 77–histidine 111, asparagine 112–proline 146, aspartate 147–proline 181, aspartate 182–proline 216, aspartate 217–alanine 251, asparagine 252–proline 286, asparagine 287–proline 321, asparagine 322–proline 356, asparagine 357–proline 391, asparagine 392–glycine 426, asparagine 427–proline 461, asparagine 462–proline 496, and aspartate 497–glutamate 528.

It belongs to the PPR family. P subfamily.

Its subcellular location is the mitochondrion. In Arabidopsis thaliana (Mouse-ear cress), this protein is Pentatricopeptide repeat-containing protein At1g62914, mitochondrial.